Consider the following 324-residue polypeptide: Acetyl-coenzyme A carboxylase carboxyl transferase subunit alpha (324 aa).

The region spanning 41-291 (RLDRLKEKIY…QEYVLQEWLK (251 aa)) is the CoA carboxyltransferase C-terminal domain.

The protein belongs to the AccA family. In terms of assembly, acetyl-CoA carboxylase is a heterohexamer composed of biotin carboxyl carrier protein (AccB), biotin carboxylase (AccC) and two subunits each of ACCase subunit alpha (AccA) and ACCase subunit beta (AccD).

It localises to the cytoplasm. It catalyses the reaction N(6)-carboxybiotinyl-L-lysyl-[protein] + acetyl-CoA = N(6)-biotinyl-L-lysyl-[protein] + malonyl-CoA. Its pathway is lipid metabolism; malonyl-CoA biosynthesis; malonyl-CoA from acetyl-CoA: step 1/1. Functionally, component of the acetyl coenzyme A carboxylase (ACC) complex. First, biotin carboxylase catalyzes the carboxylation of biotin on its carrier protein (BCCP) and then the CO(2) group is transferred by the carboxyltransferase to acetyl-CoA to form malonyl-CoA. This Chlamydia muridarum (strain MoPn / Nigg) protein is Acetyl-coenzyme A carboxylase carboxyl transferase subunit alpha.